The following is a 354-amino-acid chain: Glycerol-3-phosphate dehydrogenase [NAD(+)], glycosomal (354 aa).

Residues 15–20 (GSGAFG), phenylalanine 90, lysine 118, and alanine 150 contribute to the NAD(+) site. Lysine 118 is a substrate binding site. The active-site Proton acceptor is the lysine 203. The NAD(+) site is built by arginine 267 and glutamate 293. Substrate is bound at residue 267 to 268 (RN). Residues 352–354 (SKM) carry the Microbody targeting signal motif.

The protein belongs to the NAD-dependent glycerol-3-phosphate dehydrogenase family.

It localises to the glycosome. The enzyme catalyses sn-glycerol 3-phosphate + NAD(+) = dihydroxyacetone phosphate + NADH + H(+). The polypeptide is Glycerol-3-phosphate dehydrogenase [NAD(+)], glycosomal (GPD) (Trypanosoma brucei brucei).